We begin with the raw amino-acid sequence, 500 residues long: Carnosic acid synthase (500 aa).

Residues 4 to 24 form a helical membrane-spanning segment; the sequence is LILLSLAFLASCVVAYSRRRP. Heme is bound at residue Cys-443.

The protein belongs to the cytochrome P450 family. It depends on heme as a cofactor. As to expression, mostly expressed in young leaves, particularly in glandular trichomes.

The protein resides in the membrane. The catalysed reaction is 11-hydroxyferruginol + 3 reduced [NADPH--hemoprotein reductase] + 3 O2 = carnosate + 3 oxidized [NADPH--hemoprotein reductase] + 4 H2O + 4 H(+). The enzyme catalyses miltiradiene + 2 reduced [NADPH--hemoprotein reductase] + 2 O2 = miltiradien-20-al + 2 oxidized [NADPH--hemoprotein reductase] + 3 H2O + 2 H(+). It carries out the reaction ferruginol + 3 reduced [NADPH--hemoprotein reductase] + 3 O2 = pisiferate + 3 oxidized [NADPH--hemoprotein reductase] + 4 H2O + 4 H(+). It functions in the pathway secondary metabolite biosynthesis; terpenoid biosynthesis. Functionally, monooxygenase involved in the biosynthesis of carnosate, a potent antioxidant labdane-related diterpene natural product. Catalyzes the oxidation of 11-hydroxyferruginol to produce carnosate. Mediates the conversion of miltiradien into miltiradien-20-al. Also involved in the production of pisiferic acid and derivative products from ferruginol. The polypeptide is Carnosic acid synthase (Salvia fruticosa (Greek sage)).